We begin with the raw amino-acid sequence, 281 residues long: Release factor glutamine methyltransferase (281 aa).

Residues 121 to 125 (GSGTG), D144, and N188 contribute to the S-adenosyl-L-methionine site. 188–191 (NPPY) is a binding site for substrate.

Belongs to the protein N5-glutamine methyltransferase family. PrmC subfamily.

The catalysed reaction is L-glutaminyl-[peptide chain release factor] + S-adenosyl-L-methionine = N(5)-methyl-L-glutaminyl-[peptide chain release factor] + S-adenosyl-L-homocysteine + H(+). Functionally, methylates the class 1 translation termination release factors RF1/PrfA and RF2/PrfB on the glutamine residue of the universally conserved GGQ motif. The sequence is that of Release factor glutamine methyltransferase from Aquifex aeolicus (strain VF5).